A 2286-amino-acid polypeptide reads, in one-letter code: Non-reducing polyketide synthase fsr1 (2286 aa).

The segment at 7-342 is N-terminal acylcarrier protein transacylase domain (SAT); sequence LYLFGDQTFD…IYTALKKTSL (336 aa). The 438-residue stretch at 368-805 folds into the Ketosynthase family 3 (KS3) domain; the sequence is KPKLAIVAMS…GGNSALLIQD (438 aa). Active-site for beta-ketoacyl synthase activity residues include Cys-540, His-675, and His-722. Residues 905-1195 form an acyl/malonyl transferases region; it reads VFTFTGQGAQ…GMVKPTLGQQ (291 aa). The For acyl/malonyl transferase activity role is filled by Ser-996. The tract at residues 1285–1417 is N-terminal hotdog fold; sequence HSVVEESGDS…CVVLFKDRSH (133 aa). In terms of domain architecture, PKS/mFAS DH spans 1285 to 1591; the sequence is HSVVEESGDS…IQGVPRRVLK (307 aa). The product template (PT) domainn stretch occupies residues 1296–1588; it reads KTGIVVEADI…QIAIQGVPRR (293 aa). His-1317 functions as the Proton acceptor; for dehydratase activity in the catalytic mechanism. Residues 1444 to 1591 are C-terminal hotdog fold; the sequence is SARFNRPMAY…IQGVPRRVLK (148 aa). The Proton donor; for dehydratase activity role is filled by Asp-1504. Residues 1600–1639 are disordered; the sequence is KKGQPQRQTQDKPRNTPSQTKDSTPKPAQNKPAAKVEPPK. The Carrier 1 domain maps to 1637-1712; that stretch reads PPKFSTAIRI…DLRAFLGADE (76 aa). Ser-1671 bears the O-(pantetheine 4'-phosphoryl)serine mark. The interval 1716–1735 is disordered; that stretch reads ESSSSAASDSGRDTTTTGSA. The region spanning 1748–1823 is the Carrier 2 domain; it reads EVEFERALEI…DLKTMLAREM (76 aa). Position 1782 is an O-(pantetheine 4'-phosphoryl)serine (Ser-1782). Residues 1897-2145 form a reductase (R) domain region; it reads VTGASGGLGS…NWTPVNDIAD (249 aa).

Its pathway is polyketide biosynthesis. Its function is as follows. Non-reducing polyketide synthase; part of the gene cluster that mediates the biosynthesis of fusarubins, highly pigmented naphthoquinones responsible for the coloration of the fruiting bodies. The non-reducing polyketide synthase FSR1 is responsible for the condensation of seven acetyl-CoA units to yield a haptaketide. After rings A and B are formed by aldol-type cyclization, the PKS-derived product is released as 6-O-demethylfusarubinaldehyde. Then, two hydroxyl groups at C-5 and C-10 are incorporated by FSR3, and simultaneously hydroxyl groups at C-6 and C-8 are methylated by FSR2. The aldehyde is, on the one hand, reduced by FSR3 to 8-O-methylfusarubin alcohol, which equilibrates mainly with 8-O-methylfusarubin and only small amounts of 8-O-methylnectriafurone. On the other hand, the aldehyde can be oxidized to form 8-O-methylfusarubinic acid, a reaction driven by FSR3 equilibrating with 8-O-methylfusarubinlactone, finally resulting in 8-O-methylanhydrofusarubinlactol after a further reduction step and loss of water. 8-O-Methylfusarubinic acid can also undergo decarboxylation, resulting in 8-O-methyl-13-hydroxynorjavanicin after another hydroxylation step at C-13. Both steps are most likely also accomplished by FSR3. No enzymatic function has been determined so far for either FSR4 and FSR5. Their deletion does not alter the product spectrum, but the possibility that they catalyze specific enzymatic steps during perithecium development cannot be ruled out. FSR4 might possess a regulatory function in the biosynthesis of fusarubins. The polypeptide is Non-reducing polyketide synthase fsr1 (Gibberella fujikuroi (strain CBS 195.34 / IMI 58289 / NRRL A-6831) (Bakanae and foot rot disease fungus)).